We begin with the raw amino-acid sequence, 104 residues long: L-rhamnose mutarotase (104 aa).

Tyr18 serves as a coordination point for substrate. The active-site Proton donor is His22. Substrate is bound by residues Tyr41 and 76 to 77 (WW).

The protein belongs to the rhamnose mutarotase family. Homodimer.

The protein localises to the cytoplasm. The enzyme catalyses alpha-L-rhamnose = beta-L-rhamnose. The protein operates within carbohydrate metabolism; L-rhamnose metabolism. Functionally, involved in the anomeric conversion of L-rhamnose. The protein is L-rhamnose mutarotase of Citrobacter koseri (strain ATCC BAA-895 / CDC 4225-83 / SGSC4696).